A 140-amino-acid polypeptide reads, in one-letter code: Peptide methionine sulfoxide reductase MsrB (140 aa).

Residues Asp-9–Glu-131 enclose the MsrB domain. Positions 48, 51, 97, and 100 each coordinate Zn(2+). Catalysis depends on Cys-120, which acts as the Nucleophile.

It belongs to the MsrB Met sulfoxide reductase family. Requires Zn(2+) as cofactor.

It carries out the reaction L-methionyl-[protein] + [thioredoxin]-disulfide + H2O = L-methionyl-(R)-S-oxide-[protein] + [thioredoxin]-dithiol. The chain is Peptide methionine sulfoxide reductase MsrB from Cellvibrio japonicus (strain Ueda107) (Pseudomonas fluorescens subsp. cellulosa).